The primary structure comprises 141 residues: Large ribosomal subunit protein uL11 (141 aa).

The protein belongs to the universal ribosomal protein uL11 family. In terms of assembly, part of the ribosomal stalk of the 50S ribosomal subunit. Interacts with L10 and the large rRNA to form the base of the stalk. L10 forms an elongated spine to which L12 dimers bind in a sequential fashion forming a multimeric L10(L12)X complex. One or more lysine residues are methylated.

Functionally, forms part of the ribosomal stalk which helps the ribosome interact with GTP-bound translation factors. The sequence is that of Large ribosomal subunit protein uL11 from Chlorobium phaeobacteroides (strain DSM 266 / SMG 266 / 2430).